Reading from the N-terminus, the 357-residue chain is UDP-N-acetylglucosamine--N-acetylmuramyl-(pentapeptide) pyrophosphoryl-undecaprenol N-acetylglucosamine transferase (357 aa).

Residues 13–15 (TGG), N125, R161, S189, I243, and Q288 contribute to the UDP-N-acetyl-alpha-D-glucosamine site.

This sequence belongs to the glycosyltransferase 28 family. MurG subfamily.

The protein localises to the cell inner membrane. It carries out the reaction di-trans,octa-cis-undecaprenyl diphospho-N-acetyl-alpha-D-muramoyl-L-alanyl-D-glutamyl-meso-2,6-diaminopimeloyl-D-alanyl-D-alanine + UDP-N-acetyl-alpha-D-glucosamine = di-trans,octa-cis-undecaprenyl diphospho-[N-acetyl-alpha-D-glucosaminyl-(1-&gt;4)]-N-acetyl-alpha-D-muramoyl-L-alanyl-D-glutamyl-meso-2,6-diaminopimeloyl-D-alanyl-D-alanine + UDP + H(+). It participates in cell wall biogenesis; peptidoglycan biosynthesis. Cell wall formation. Catalyzes the transfer of a GlcNAc subunit on undecaprenyl-pyrophosphoryl-MurNAc-pentapeptide (lipid intermediate I) to form undecaprenyl-pyrophosphoryl-MurNAc-(pentapeptide)GlcNAc (lipid intermediate II). The chain is UDP-N-acetylglucosamine--N-acetylmuramyl-(pentapeptide) pyrophosphoryl-undecaprenol N-acetylglucosamine transferase from Bordetella pertussis (strain Tohama I / ATCC BAA-589 / NCTC 13251).